A 78-amino-acid polypeptide reads, in one-letter code: Protein SlyX homolog (78 aa).

This sequence belongs to the SlyX family.

The sequence is that of Protein SlyX homolog from Xanthomonas axonopodis pv. citri (strain 306).